The chain runs to 272 residues: Ribosomal RNA small subunit methyltransferase A (272 aa).

S-adenosyl-L-methionine contacts are provided by His-10, Leu-12, Gly-37, Glu-57, Asp-82, and Asn-98.

The protein belongs to the class I-like SAM-binding methyltransferase superfamily. rRNA adenine N(6)-methyltransferase family. RsmA subfamily.

Its subcellular location is the cytoplasm. It catalyses the reaction adenosine(1518)/adenosine(1519) in 16S rRNA + 4 S-adenosyl-L-methionine = N(6)-dimethyladenosine(1518)/N(6)-dimethyladenosine(1519) in 16S rRNA + 4 S-adenosyl-L-homocysteine + 4 H(+). Functionally, specifically dimethylates two adjacent adenosines (A1518 and A1519) in the loop of a conserved hairpin near the 3'-end of 16S rRNA in the 30S particle. May play a critical role in biogenesis of 30S subunits. This chain is Ribosomal RNA small subunit methyltransferase A, found in Gloeobacter violaceus (strain ATCC 29082 / PCC 7421).